We begin with the raw amino-acid sequence, 525 residues long: GMP synthase [glutamine-hydrolyzing] (525 aa).

In terms of domain architecture, Glutamine amidotransferase type-1 spans 8–207 (KILILDFGSQ…ALDICGCAAN (200 aa)). The active-site Nucleophile is Cys-85. Residues His-181 and Glu-183 contribute to the active site. One can recognise a GMPS ATP-PPase domain in the interval 208 to 400 (WKPSSIIEDA…LGLPYNMLYR (193 aa)). ATP is bound at residue 235-241 (SGGVDSS).

In terms of assembly, homodimer.

The enzyme catalyses XMP + L-glutamine + ATP + H2O = GMP + L-glutamate + AMP + diphosphate + 2 H(+). It participates in purine metabolism; GMP biosynthesis; GMP from XMP (L-Gln route): step 1/1. In terms of biological role, catalyzes the synthesis of GMP from XMP. In Shewanella baltica (strain OS155 / ATCC BAA-1091), this protein is GMP synthase [glutamine-hydrolyzing].